A 299-amino-acid chain; its full sequence is Virginiamycin B lyase (299 aa).

Histidine 229 is a substrate binding site. Mg(2+) is bound at residue glutamate 269. The active-site Proton acceptor is the histidine 271. Glutamate 286 lines the Mg(2+) pocket.

This sequence belongs to the Vgb family. In terms of assembly, monomer. Mg(2+) serves as cofactor.

Inactivates the type B streptogramin antibiotics by linearizing the lactone ring at the ester linkage, generating a free phenylglycine carboxylate and converting the threonyl moiety into 2-amino-butenoic acid. This chain is Virginiamycin B lyase, found in Bordetella bronchiseptica (strain ATCC BAA-588 / NCTC 13252 / RB50) (Alcaligenes bronchisepticus).